The primary structure comprises 710 residues: Ephexin-1 (710 aa).

A compositionally biased stretch (basic and acidic residues) spans 1–20; it reads METKNSEDWGKPQRKSESSS. The segment at 1–146 is disordered; it reads METKNSEDWG…TPEECPALTD (146 aa). Residues 1–272 form a regulatory region; modulates activity toward RHOA, RAC1 and CDC42 region; it reads METKNSEDWG…VLDILQPEEI (272 aa). The segment covering 123-137 has biased composition (polar residues); that stretch reads QEASESSSTPGNGTT. Y177 is modified (phosphotyrosine). Positions 192–234 are disordered; it reads RRQQDAEIQGNSDGSQVGEDAGEEEEEEEEGEEEELASPPERR. Over residues 211-227 the composition is skewed to acidic residues; sequence DAGEEEEEEEEGEEEEL. A DH domain is found at 273 to 457; the sequence is RLQEAMFELV…EMVVKACNEG (185 aa). A PH domain is found at 489–601; sequence WLLKQGELQQ…WMTSLAPNRR (113 aa). Residues 612-673 enclose the SH3 domain; that stretch reads LDCPQVQCVH…PSSMTEEILN (62 aa). Residues 688–699 show a composition bias toward basic and acidic residues; sequence HKMEDPQRSQNK. The interval 688–710 is disordered; sequence HKMEDPQRSQNKDRRKLGSRNRQ. Positions 700–710 are enriched in basic residues; it reads DRRKLGSRNRQ.

In terms of assembly, interacts with CDK5R1 and EPHA4; activated by EPHA4 through the CDK5 kinase. Src-dependent phosphorylation at Tyr-177 upon EPHA4 activation increases the guanine exchange factor activity toward RHOA. Phosphorylation by CDK5 upon EPHA4 activation by EFNA1 may regulate dendritic spine morphogenesis. As to expression, highly expressed in brain and to a lower extent in eye.

It localises to the cytoplasm. Its subcellular location is the membrane. It is found in the cell projection. The protein resides in the growth cone. Its function is as follows. Acts as a guanine nucleotide exchange factor (GEF) which differentially activates the GTPases RHOA, RAC1 and CDC42. Plays a role in axon guidance regulating ephrin-induced growth cone collapse and dendritic spine morphogenesis. Upon activation by ephrin through EPHA4, the GEF activity switches toward RHOA resulting in its activation. Activated RHOA promotes cone retraction at the expense of RAC1- and CDC42-stimulated growth cone extension. The protein is Ephexin-1 (Ngef) of Mus musculus (Mouse).